Consider the following 122-residue polypeptide: Small ribosomal subunit protein uS13 (122 aa).

The tract at residues 95-122 (GLPVHGQRTHTNARTRKGPRRGAVGKKK) is disordered.

The protein belongs to the universal ribosomal protein uS13 family. As to quaternary structure, part of the 30S ribosomal subunit. Forms a loose heterodimer with protein S19. Forms two bridges to the 50S subunit in the 70S ribosome.

Functionally, located at the top of the head of the 30S subunit, it contacts several helices of the 16S rRNA. In the 70S ribosome it contacts the 23S rRNA (bridge B1a) and protein L5 of the 50S subunit (bridge B1b), connecting the 2 subunits; these bridges are implicated in subunit movement. Contacts the tRNAs in the A and P-sites. The chain is Small ribosomal subunit protein uS13 from Desulfovibrio desulfuricans (strain ATCC 27774 / DSM 6949 / MB).